A 203-amino-acid chain; its full sequence is uncharacterized protein (203 aa).

The first 23 residues, 1-23 (MKKIYKALISSLLLSTSINVAYA), serve as a signal peptide directing secretion. An SH3b domain is found at 24–87 (ETQYVTENLS…ILNSDLSSTP (64 aa)). Residues 167–189 (IAIQWFIYGGSVLGVGLLFGLLI) form a helical membrane-spanning segment.

It to E.coli YgiM.

Its subcellular location is the membrane. This is an uncharacterized protein from Haemophilus influenzae (strain ATCC 51907 / DSM 11121 / KW20 / Rd).